Here is a 775-residue protein sequence, read N- to C-terminus: DNA polymerase (775 aa).

This sequence belongs to the DNA polymerase type-B family. Monomer.

It catalyses the reaction DNA(n) + a 2'-deoxyribonucleoside 5'-triphosphate = DNA(n+1) + diphosphate. In terms of biological role, in addition to polymerase activity, this DNA polymerase exhibits 3' to 5' exonuclease activity. The polypeptide is DNA polymerase (pol) (Pyrococcus glycovorans).